The sequence spans 475 residues: BTB/POZ domain-containing protein 10 (475 aa).

The tract at residues 1–143 (MAGRPHPYDG…SSQSSSDGSC (143 aa)) is disordered. Basic residues predominate over residues 22–31 (LHSRPRKLYK). Positions 57-80 (GHERSRDRRRSSDRSRDSSHERTE) are enriched in basic and acidic residues. Positions 81 to 94 (SQLTPCIRNVTSPT) are enriched in polar residues. The segment covering 97 to 107 (HHVEREKDHSS) has biased composition (basic and acidic residues). Residues 108 to 142 (SRPSSPRPQKASPNGSISSAGNSSRNSSQSSSDGS) show a composition bias toward low complexity. The segment at 146-475 (AGEMVFVYEN…LDPDAQNPTL (330 aa)) is interaction with AKT family members. Positions 167-241 (ERVTLIVDNT…YKTGIIRCPD (75 aa)) constitute a BTB domain. Residues 456-475 (PIHPPSGNSDLDPDAQNPTL) are disordered.

In terms of assembly, interacts (via C-terminal 330-amino-acid region) with AKT1; AKT2 and AKT3. Interacts with PPP2CA and PPP1CA.

The protein resides in the nucleus. It localises to the cytoplasm. Functionally, plays a major role as an activator of AKT family members by inhibiting PPP2CA-mediated dephosphorylation, thereby keeping AKTs activated. Plays a role in preventing motor neuronal death and in accelerating the growth of pancreatic beta cells. The chain is BTB/POZ domain-containing protein 10 (BTBD10) from Pongo abelii (Sumatran orangutan).